A 337-amino-acid chain; its full sequence is Cytidine deaminase 2 (337 aa).

2 CMP/dCMP-type deaminase domains span residues 43–164 (TDPI…FSSL) and 199–320 (LDCS…LKYL). 84-86 (NVD) provides a ligand contact to substrate. Residue histidine 97 participates in Zn(2+) binding. Residue glutamate 99 is the Proton donor of the active site. 2 residues coordinate Zn(2+): cysteine 132 and cysteine 135.

This sequence belongs to the cytidine and deoxycytidylate deaminase family. In terms of assembly, homodimer. Zn(2+) is required as a cofactor.

The enzyme catalyses cytidine + H2O + H(+) = uridine + NH4(+). It carries out the reaction 2'-deoxycytidine + H2O + H(+) = 2'-deoxyuridine + NH4(+). Its function is as follows. This enzyme scavenges exogenous and endogenous cytidine and 2'-deoxycytidine for UMP synthesis. This is Cytidine deaminase 2 (CDA2) from Arabidopsis thaliana (Mouse-ear cress).